The following is a 282-amino-acid chain: Pantothenate synthetase (282 aa).

Residue 30–37 (MGYLHEGH) participates in ATP binding. H37 serves as the catalytic Proton donor. A (R)-pantoate-binding site is contributed by Q61. Residue Q61 participates in beta-alanine binding. 147–150 (GMKD) provides a ligand contact to ATP. Q153 serves as a coordination point for (R)-pantoate. ATP-binding positions include V176 and 184–187 (KSSR).

It belongs to the pantothenate synthetase family. In terms of assembly, homodimer.

The protein localises to the cytoplasm. The catalysed reaction is (R)-pantoate + beta-alanine + ATP = (R)-pantothenate + AMP + diphosphate + H(+). It functions in the pathway cofactor biosynthesis; (R)-pantothenate biosynthesis; (R)-pantothenate from (R)-pantoate and beta-alanine: step 1/1. Functionally, catalyzes the condensation of pantoate with beta-alanine in an ATP-dependent reaction via a pantoyl-adenylate intermediate. The sequence is that of Pantothenate synthetase from Bacillus cereus (strain ZK / E33L).